A 328-amino-acid polypeptide reads, in one-letter code: Malate dehydrogenase (328 aa).

12 to 18 provides a ligand contact to NAD(+); that stretch reads GAAGQIA. Substrate contacts are provided by Arg-93 and Arg-99. NAD(+) is bound by residues Asn-106, Gln-113, and 130 to 132; that span reads VGN. 2 residues coordinate substrate: Asn-132 and Arg-163. His-188 functions as the Proton acceptor in the catalytic mechanism.

Belongs to the LDH/MDH superfamily. MDH type 2 family.

It carries out the reaction (S)-malate + NAD(+) = oxaloacetate + NADH + H(+). In terms of biological role, catalyzes the reversible oxidation of malate to oxaloacetate. The sequence is that of Malate dehydrogenase from Burkholderia cenocepacia (strain ATCC BAA-245 / DSM 16553 / LMG 16656 / NCTC 13227 / J2315 / CF5610) (Burkholderia cepacia (strain J2315)).